Consider the following 228-residue polypeptide: Putative N-acetylmannosamine-6-phosphate 2-epimerase (228 aa).

The protein belongs to the NanE family.

The catalysed reaction is an N-acyl-D-glucosamine 6-phosphate = an N-acyl-D-mannosamine 6-phosphate. It functions in the pathway amino-sugar metabolism; N-acetylneuraminate degradation; D-fructose 6-phosphate from N-acetylneuraminate: step 3/5. Functionally, converts N-acetylmannosamine-6-phosphate (ManNAc-6-P) to N-acetylglucosamine-6-phosphate (GlcNAc-6-P). The sequence is that of Putative N-acetylmannosamine-6-phosphate 2-epimerase from Mycoplasmopsis pulmonis (strain UAB CTIP) (Mycoplasma pulmonis).